The sequence spans 256 residues: Triosephosphate isomerase (256 aa).

9–11 (NWK) contacts substrate. H95 acts as the Electrophile in catalysis. E167 (proton acceptor) is an active-site residue. Substrate is bound by residues G173, S213, and 234–235 (GG).

It belongs to the triosephosphate isomerase family. Homodimer.

It is found in the cytoplasm. It carries out the reaction D-glyceraldehyde 3-phosphate = dihydroxyacetone phosphate. The protein operates within carbohydrate biosynthesis; gluconeogenesis. It functions in the pathway carbohydrate degradation; glycolysis; D-glyceraldehyde 3-phosphate from glycerone phosphate: step 1/1. In terms of biological role, involved in the gluconeogenesis. Catalyzes stereospecifically the conversion of dihydroxyacetone phosphate (DHAP) to D-glyceraldehyde-3-phosphate (G3P). The sequence is that of Triosephosphate isomerase from Symbiobacterium thermophilum (strain DSM 24528 / JCM 14929 / IAM 14863 / T).